A 423-amino-acid polypeptide reads, in one-letter code: ATP-dependent RNA helicase RhlB (423 aa).

Residues 9 to 37 (LRFSDLPLHHQVLAALQEKGFDYCTPIQA) carry the Q motif motif. A Helicase ATP-binding domain is found at 40-217 (LPMSLAGKDV…FEDMNDPEYV (178 aa)). Residue 53–60 (AQTGTGKT) coordinates ATP. The DEAD box motif lies at 163–166 (DEAD). One can recognise a Helicase C-terminal domain in the interval 241 to 388 (KMALLLTLLE…VSQYDVAALL (148 aa)). A disordered region spans residues 397 to 423 (KRGNNNSKNSANSNRTFQKKRSLKRNF). The segment covering 400 to 410 (NNNSKNSANSN) has biased composition (low complexity). The span at 413-423 (FQKKRSLKRNF) shows a compositional bias: basic residues.

It belongs to the DEAD box helicase family. RhlB subfamily. Component of the RNA degradosome, which is a multiprotein complex involved in RNA processing and mRNA degradation.

The protein resides in the cytoplasm. It catalyses the reaction ATP + H2O = ADP + phosphate + H(+). DEAD-box RNA helicase involved in RNA degradation. Has RNA-dependent ATPase activity and unwinds double-stranded RNA. This Pasteurella multocida (strain Pm70) protein is ATP-dependent RNA helicase RhlB.